Here is a 263-residue protein sequence, read N- to C-terminus: Glucosamine-6-phosphate deaminase (263 aa).

Catalysis depends on D67, which acts as the Proton acceptor; for enolization step. The active-site For ring-opening step is the N136. H138 (proton acceptor; for ring-opening step) is an active-site residue. Catalysis depends on E143, which acts as the For ring-opening step.

This sequence belongs to the glucosamine/galactosamine-6-phosphate isomerase family. NagB subfamily. As to quaternary structure, homohexamer.

The enzyme catalyses alpha-D-glucosamine 6-phosphate + H2O = beta-D-fructose 6-phosphate + NH4(+). Its pathway is amino-sugar metabolism; N-acetylneuraminate degradation; D-fructose 6-phosphate from N-acetylneuraminate: step 5/5. Functionally, catalyzes the reversible isomerization-deamination of glucosamine 6-phosphate (GlcN6P) to form fructose 6-phosphate (Fru6P) and ammonium ion. In Shewanella halifaxensis (strain HAW-EB4), this protein is Glucosamine-6-phosphate deaminase.